Consider the following 227-residue polypeptide: Probable methylthioribulose-1-phosphate dehydratase (227 aa).

Position 87 (C87) interacts with substrate. Residues H105 and H107 each coordinate Zn(2+). E129 serves as the catalytic Proton donor/acceptor. H185 contributes to the Zn(2+) binding site.

The protein belongs to the aldolase class II family. MtnB subfamily. Zn(2+) is required as a cofactor.

It is found in the cytoplasm. The enzyme catalyses 5-(methylsulfanyl)-D-ribulose 1-phosphate = 5-methylsulfanyl-2,3-dioxopentyl phosphate + H2O. It functions in the pathway amino-acid biosynthesis; L-methionine biosynthesis via salvage pathway; L-methionine from S-methyl-5-thio-alpha-D-ribose 1-phosphate: step 2/6. In terms of biological role, catalyzes the dehydration of methylthioribulose-1-phosphate (MTRu-1-P) into 2,3-diketo-5-methylthiopentyl-1-phosphate (DK-MTP-1-P). The chain is Probable methylthioribulose-1-phosphate dehydratase from Drosophila ananassae (Fruit fly).